A 200-amino-acid chain; its full sequence is Eukaryotic translation initiation factor isoform 4E (200 aa).

MRNA-binding positions include Gln44–Gly49, Lys76, and Trp94–Glu95. Residues Cys99 and Cys138 are joined by a disulfide bond. Residues Arg145–Lys150 and Lys189–Arg192 contribute to the mRNA site.

The protein belongs to the eukaryotic initiation factor 4E family. EIF4F is a multi-subunit complex, the composition of which varies with external and internal environmental conditions. It is composed of at least EIF4A, EIF4E and EIF4G. EIF4E is also known to interact with other partners. In higher plants two isoforms of EIF4F have been identified, named isoform EIF4F and isoform EIF(iso)4F. Isoform EIF4F has subunits p220 and p26, whereas isoform EIF(iso)4F has subunits p82 and p28. In terms of assembly, (Microbial infection) Interacts with viral genome-linked protein (VPg); this interaction is possible in susceptible hosts but impaired in resistant plants. According to the redox status, the Cys-99-Cys-138 disulfide bridge may have a role in regulating protein function by affecting its ability to bind capped mRNA. In terms of tissue distribution, mostly expressed in roots and leaves, and, to a lower extent, in stems, flowers and immature green fruits.

It localises to the cytoplasm. It is found in the nucleus. Its function is as follows. Component of the protein complex eIF4F, which is involved in the recognition of the mRNA cap, ATP-dependent unwinding of 5'-terminal secondary structure and recruitment of mRNA to the ribosome. Recognizes and binds the 7-methylguanosine-containing mRNA cap during an early step in the initiation of protein synthesis and facilitates ribosome binding by inducing the unwinding of the mRNAs secondary structures. Key component of recessive resistance to potyviruses. (Microbial infection) Susceptibility host factor required for viral infection by recruiting viral RNAs to the host ribosomal complex via an interaction with viral genome-linked protein (VPg). The protein is Eukaryotic translation initiation factor isoform 4E of Solanum lycopersicum (Tomato).